A 402-amino-acid chain; its full sequence is Multidrug resistance protein MdtH (402 aa).

Residues 1–12 (MSRVSQARNLGK) lie on the Cytoplasmic side of the membrane. A helical membrane pass occupies residues 13-33 (YFLLIDNMLVVLGFFVVFPLI). The Periplasmic segment spans residues 34–98 (SIRFVDQMGW…GFATMGIAHE (65 aa)). The helical transmembrane segment at 99–116 (PWLLWFSCFLSGLGGTLF) threads the bilayer. Residues 117–138 (DPPRSALVVKLIRPEQRGRFFS) lie on the Cytoplasmic side of the membrane. A helical membrane pass occupies residues 139–159 (LLMMQDSAGAVIGALLGSWLL). Over 160–164 (QYDFR) the chain is Periplasmic. A helical membrane pass occupies residues 165–185 (LVCATGAILFILCALFNAWLL). The Cytoplasmic segment spans residues 186-213 (PAWKLSTVRTPVREGMRRVMSDKRFVTY). Residues 214–234 (VLTLAGYYMLAVQVMLMLPIM) traverse the membrane as a helical segment. Residues 235–243 (VNDIAGSPA) lie on the Periplasmic side of the membrane. The helical transmembrane segment at 244-264 (AVKWMYAIEACLSLTLLYPIA) threads the bilayer. The Cytoplasmic portion of the chain corresponds to 265–276 (RWSEKRFRLEHR). A helical transmembrane segment spans residues 277 to 297 (LMAGLLVMSLSMIPIGMVGNL). Residues 298 to 299 (QQ) lie on the Periplasmic side of the membrane. A helical transmembrane segment spans residues 300-320 (LFTLICAFYIGSVIAEPARET). Residues 321–339 (LSASLADARARGSYMGFSR) are Cytoplasmic-facing. The chain crosses the membrane as a helical span at residues 340-360 (LGLAIGGAIGYIGGGWLFDMG). The Periplasmic portion of the chain corresponds to 361–367 (KALTQPE). The chain crosses the membrane as a helical span at residues 368–388 (LPWMMLGIIGFITFLALGWQF). Residues 389-402 (SHKRTPRRMLEPGA) are Cytoplasmic-facing.

The protein belongs to the major facilitator superfamily. DHA1 family. MdtH (TC 2.A.1.2.21) subfamily.

It is found in the cell inner membrane. The sequence is that of Multidrug resistance protein MdtH from Salmonella paratyphi B (strain ATCC BAA-1250 / SPB7).